A 529-amino-acid polypeptide reads, in one-letter code: Peptide chain release factor 3 (529 aa).

In terms of domain architecture, tr-type G spans 11–279; sequence AKRRTFAIIS…GLVDWAPKPQ (269 aa). Residues 20 to 27, 88 to 92, and 142 to 145 contribute to the GTP site; these read SHPDAGKT, DTPGH, and NKLD.

It belongs to the TRAFAC class translation factor GTPase superfamily. Classic translation factor GTPase family. PrfC subfamily.

The protein localises to the cytoplasm. In terms of biological role, increases the formation of ribosomal termination complexes and stimulates activities of RF-1 and RF-2. It binds guanine nucleotides and has strong preference for UGA stop codons. It may interact directly with the ribosome. The stimulation of RF-1 and RF-2 is significantly reduced by GTP and GDP, but not by GMP. This is Peptide chain release factor 3 from Idiomarina loihiensis (strain ATCC BAA-735 / DSM 15497 / L2-TR).